The chain runs to 332 residues: Glycerol-3-phosphate dehydrogenase [NAD(P)+] (332 aa).

Residues W11, R30, and K108 each coordinate NADPH. 3 residues coordinate sn-glycerol 3-phosphate: K108, G137, and S139. A141 contributes to the NADPH binding site. Sn-glycerol 3-phosphate contacts are provided by K192, D245, S255, R256, and N257. K192 (proton acceptor) is an active-site residue. R256 lines the NADPH pocket. The NADPH site is built by V280 and E282.

This sequence belongs to the NAD-dependent glycerol-3-phosphate dehydrogenase family.

It is found in the cytoplasm. It carries out the reaction sn-glycerol 3-phosphate + NAD(+) = dihydroxyacetone phosphate + NADH + H(+). The catalysed reaction is sn-glycerol 3-phosphate + NADP(+) = dihydroxyacetone phosphate + NADPH + H(+). Its pathway is membrane lipid metabolism; glycerophospholipid metabolism. Its function is as follows. Catalyzes the reduction of the glycolytic intermediate dihydroxyacetone phosphate (DHAP) to sn-glycerol 3-phosphate (G3P), the key precursor for phospholipid synthesis. The protein is Glycerol-3-phosphate dehydrogenase [NAD(P)+] of Burkholderia vietnamiensis (strain G4 / LMG 22486) (Burkholderia cepacia (strain R1808)).